We begin with the raw amino-acid sequence, 1331 residues long: Serine/threonine-protein kinase SSK22 (1331 aa).

Positions 1034-1310 (WQKRSFIGGG…AVELLIDPWM (277 aa)) constitute a Protein kinase domain. ATP contacts are provided by residues 1040 to 1048 (IGGGTFGQV) and lysine 1063. Aspartate 1158 acts as the Proton acceptor in catalysis.

The protein belongs to the protein kinase superfamily. STE Ser/Thr protein kinase family. MAP kinase kinase kinase subfamily. In terms of assembly, interacts with by SSK1.

The enzyme catalyses L-seryl-[protein] + ATP = O-phospho-L-seryl-[protein] + ADP + H(+). The catalysed reaction is L-threonyl-[protein] + ATP = O-phospho-L-threonyl-[protein] + ADP + H(+). Functionally, kinase involved in a signal transduction pathway that is activated by changes in the osmolarity of the extracellular environment. Activates the PBS2 MAP kinase kinase by phosphorylation. The polypeptide is Serine/threonine-protein kinase SSK22 (SSK22) (Saccharomyces cerevisiae (strain ATCC 204508 / S288c) (Baker's yeast)).